A 607-amino-acid chain; its full sequence is MCGIVGIVGHSQVAPLIVDALKRLEYRGYDSAGVATIEHGELARRRAEGKLINLERRLKEEPLDGTIGIGHTRWATHGVPNETNAHPHFSDGVAIVHNGIIENFAELRDELVRDGYAFSSQTDTEVVAHLVARELAKGLKPVEAAHQALKRLEGAFALAIMFKGDEDLIVGARNGPPLAVGHGDGEMFLGSDAIALAPFTNSITYLEDGDWAVVRRDSVAIFDIDGKKVERKRQQSLSTSFMVDKGNRRHFMEKEIHEQPEVISHTLAHYVDFVSGVSKPLDLPFDFAKIGRLAISACGTAYLAGLIGKYWFERYARLPVDIDVASEFRYREMPLSANDAAFFISQSGETADTLASLRYCRKAGMKIGAVVNVRESTMARESDVVLPTLAGPEIGVASTKAFTCQLSVLASLAVRAGVARGVISQEQEKTLVRALSEAPRYANQVLKLEEQIERIARELSRYKDVLYLGRDTNFPLAMEGALKLKEISYIHAEGYAAGELKHGPIALIDENMPVIVIAPHDRIFEKTVSNMQEVAARGGKIILITDSKGAAQVSVKTMETIILPDVPEIISPIIYALPIQMLAYFAAVFMGTDVDQPRNLAKSVTVE.

Catalysis depends on Cys-2, which acts as the Nucleophile; for GATase activity. Residues 2–217 (CGIVGIVGHS…DGDWAVVRRD (216 aa)) form the Glutamine amidotransferase type-2 domain. SIS domains follow at residues 283–422 (LPFD…ARGV) and 455–597 (IARE…VDQP). Lys-602 serves as the catalytic For Fru-6P isomerization activity.

Homodimer.

Its subcellular location is the cytoplasm. It catalyses the reaction D-fructose 6-phosphate + L-glutamine = D-glucosamine 6-phosphate + L-glutamate. Its function is as follows. Catalyzes the first step in hexosamine metabolism, converting fructose-6P into glucosamine-6P using glutamine as a nitrogen source. In Mesorhizobium japonicum (strain LMG 29417 / CECT 9101 / MAFF 303099) (Mesorhizobium loti (strain MAFF 303099)), this protein is Glutamine--fructose-6-phosphate aminotransferase [isomerizing].